A 586-amino-acid polypeptide reads, in one-letter code: A-type ATP synthase subunit A (586 aa).

232–239 (GPFGSGKT) is an ATP binding site.

It belongs to the ATPase alpha/beta chains family. As to quaternary structure, has multiple subunits with at least A(3), B(3), C, D, E, F, H, I and proteolipid K(x).

The protein resides in the cell membrane. It catalyses the reaction ATP + H2O + 4 H(+)(in) = ADP + phosphate + 5 H(+)(out). Component of the A-type ATP synthase that produces ATP from ADP in the presence of a proton gradient across the membrane. The A chain is the catalytic subunit. The protein is A-type ATP synthase subunit A of Methanococcus maripaludis (strain C5 / ATCC BAA-1333).